The following is a 108-amino-acid chain: MSRFVSAALVGAALLVSGNAFAYDAAAGKATYDASCATCHKTGMMGAPKVGDKAAWAPRIAQGMNTLVSKSIKGYKGTKGMMPAKGGNAKLTDAQVGNAVAYMVGQSK.

The signal sequence occupies residues 1–22; the sequence is MSRFVSAALVGAALLVSGNAFA. 4 residues coordinate heme c: cysteine 36, cysteine 39, histidine 40, and methionine 82.

Binds 1 heme c group covalently per subunit.

This basic c-type monoheme cytochrome has been found exclusively in the green photosynthetic bacteria, although its role in bacterial photosynthesis is not established. It has an unusually low redox potential compared with mitochondrial cytochrome c. It is reactive with cytochrome c oxidases but not with reductases. In Chlorobaculum tepidum (strain ATCC 49652 / DSM 12025 / NBRC 103806 / TLS) (Chlorobium tepidum), this protein is Cytochrome c-555.